A 451-amino-acid chain; its full sequence is C4-dicarboxylate transport protein (451 aa).

The next 9 helical transmembrane spans lie at 17–37, 53–73, 85–105, 153–173, 193–213, 231–251, 306–326, 339–359, and 361–381; these read SLYVQVLFAVVVGVLLGHFYP, LIKMIIAPIIFCTVVVGIAGM, LALLYFEIVSSVALVIGLIVV, AFAKGEILQVLLIAVMFGFAL, VLFTIVGYIMKVAPIGAFGAM, LMGSFYLTCLLFVFVVLGLIA, GYSFNLDGTSIYLTMAAVFIA, ITLLLVLLLTSKGAAGITGSG, and IVLAATLSAVGHVPVAGLALI.

Belongs to the dicarboxylate/amino acid:cation symporter (DAACS) (TC 2.A.23) family.

It is found in the cell inner membrane. Responsible for the transport of dicarboxylates such as succinate, fumarate, and malate from the periplasm across the membrane. In Paracidovorax citrulli (strain AAC00-1) (Acidovorax citrulli), this protein is C4-dicarboxylate transport protein.